The primary structure comprises 1521 residues: Suppressor of Ty 6 homolog (1521 aa).

The segment at 1–204 (MDFIDNQAEE…EGAEDDARDV (204 aa)) is disordered. The segment covering 26–41 (KKMKMAKDKLKKKKKV) has biased composition (basic residues). The Nuclear localization signal signature appears at 26–42 (KKMKMAKDKLKKKKKVV). Acidic residues-rich tracts occupy residues 45–56 (SDEDEDDEDDEE) and 67–76 (ADEDDEEEDA). The segment covering 77–89 (RSEKSDRSRRSEI) has biased composition (basic and acidic residues). Over residues 90–103 (NDELDDEDLDLIDE) the composition is skewed to acidic residues. Basic and acidic residues predominate over residues 127–149 (PIRRSNQDDDDLQSERGSDDGDK). A compositionally biased stretch (acidic residues) spans 167–177 (RSEDDFIEDDG). The S1 motif domain maps to 1182-1251 (LNAGRPGGCV…EKFSILLSCK (70 aa)). One can recognise an SH2 domain in the interval 1299–1388 (HPNFHNVSYE…IARFVLPMIQ (90 aa)). The interval 1490–1521 (GIRSSLSYRPTGRTGPPPSAPYQQPPQQQYYR) is disordered. Positions 1504 to 1513 (GPPPSAPYQQ) are enriched in pro residues.

It belongs to the SPT6 family. Interacts with glp-1 and lin-12.

The protein localises to the nucleus. In terms of biological role, histone H3-H4 chaperone that plays a role in maintenance of chromatin structure during RNA polymerase II transcription elongation. May be required for several aspects of morphogenesis of C.briggsae, including regulation of division in the germline and gut and specification of ventral-uterine precursor cell fate. This chain is Suppressor of Ty 6 homolog (emb-5), found in Caenorhabditis briggsae.